The primary structure comprises 166 residues: Myosin regulatory light chain 2, ventricular/cardiac muscle isoform (166 aa).

A N,N,N-trimethylalanine modification is found at Ala-2. Asn-14 is subject to Deamidated asparagine. The residue at position 15 (Ser-15) is a Phosphoserine; by ZIPK/DAPK3. A Phosphoserine modification is found at Ser-19. 3 consecutive EF-hand domains span residues 24-59, 94-129, and 130-165; these read TQIQEFKEAFTIMDQNRDGFIDKNDLRDTFAALGRV, DPEETILNAFKVFDPEGKGVLKADYVREMLTTQAER, and FSKEEVDQMFAAFPPDVTGNLDYKNLVHIITHGEEK. Asp-37, Asn-39, Asp-41, and Asp-48 together coordinate Ca(2+). At Thr-52 the chain carries Phosphothreonine.

Myosin is a hexamer of 2 heavy chains and 4 light chains. Interacts with MYOC. N-terminus is methylated by METTL11A/NTM1. In terms of processing, phosphorylated by MYLK3 and MYLK2; promotes cardiac muscle contraction and function. Dephosphorylated by PPP1CB complexed to PPP1R12B. The phosphorylated form in adult is expressed as gradients across the heart from endocardium (low phosphorylation) to epicardium (high phosphorylation); regulates cardiac torsion and workload distribution. Highly expressed in type I muscle fibers.

Its subcellular location is the cytoplasm. The protein localises to the myofibril. It localises to the sarcomere. The protein resides in the a band. Its function is as follows. Contractile protein that plays a role in heart development and function. Following phosphorylation, plays a role in cross-bridge cycling kinetics and cardiac muscle contraction by increasing myosin lever arm stiffness and promoting myosin head diffusion; as a consequence of the increase in maximum contraction force and calcium sensitivity of contraction force. These events altogether slow down myosin kinetics and prolong duty cycle resulting in accumulated myosins being cooperatively recruited to actin binding sites to sustain thin filament activation as a means to fine-tune myofilament calcium sensitivity to force. During cardiogenesis plays an early role in cardiac contractility by promoting cardiac myofibril assembly. The polypeptide is Myosin regulatory light chain 2, ventricular/cardiac muscle isoform (Homo sapiens (Human)).